We begin with the raw amino-acid sequence, 246 residues long: MVRQMLIFDMDGTLTDPVQVINNDVKDILRRCKRKNFEIAVVSGSKYEKIKGQLNDGFIDEFDYVFSENGTQVYVKNVLVKSLDITEAIPETKLRKMVEFCLRYIADLDIPTKRGTFIEHRKSLINICPPGRNCSMVDRRRFVEYDSIHHVRQKLIQVLKSQFDSDDCPLSFVAGGQISIDVYPKAWSKSIALSHIGKCDVIHFFGDNTREGGNDFEIYNHPDVIGHTVTGYKDLVNQLEELLAKS.

D9 functions as the Nucleophile in the catalytic mechanism. Mg(2+)-binding residues include D9 and D11. Catalysis depends on D11, which acts as the Proton donor/acceptor. Alpha-D-mannose 1-phosphate contacts are provided by R121, R132, R139, S179, and D181. D207 is a binding site for Mg(2+).

The protein belongs to the eukaryotic PMM family. Homodimer.

The protein localises to the cytoplasm. The enzyme catalyses alpha-D-mannose 1-phosphate = D-mannose 6-phosphate. It participates in nucleotide-sugar biosynthesis; GDP-alpha-D-mannose biosynthesis; alpha-D-mannose 1-phosphate from D-fructose 6-phosphate: step 2/2. Its function is as follows. Involved in the synthesis of the GDP-mannose and dolichol-phosphate-mannose required for a number of critical mannosyl transfer reactions. In Babesia bovis, this protein is Phosphomannomutase (PMM).